The sequence spans 94 residues: Large ribosomal subunit protein uL23 (94 aa).

Belongs to the universal ribosomal protein uL23 family. As to quaternary structure, part of the 50S ribosomal subunit. Contacts protein L29, and trigger factor when it is bound to the ribosome.

Its function is as follows. One of the early assembly proteins it binds 23S rRNA. One of the proteins that surrounds the polypeptide exit tunnel on the outside of the ribosome. Forms the main docking site for trigger factor binding to the ribosome. This Symbiobacterium thermophilum (strain DSM 24528 / JCM 14929 / IAM 14863 / T) protein is Large ribosomal subunit protein uL23.